A 377-amino-acid chain; its full sequence is Guanine nucleotide-binding protein subunit beta (377 aa).

WD repeat units follow at residues 63-93 (GHTG…IVWN), 105-135 (LPCA…SIFN), 154-185 (GHKG…VLWD), 202-233 (GHTA…RLWD), 246-276 (GHES…RLFD), 293-323 (GDIP…YVWD), and 339-369 (SHEG…KIWA).

It belongs to the WD repeat G protein beta family. As to quaternary structure, g proteins are composed of 3 units, alpha, beta and gamma.

Functionally, guanine nucleotide-binding proteins (G proteins) are involved as a modulator or transducer in various transmembrane signaling systems. The beta and gamma chains are required for the GTPase activity, for replacement of GDP by GTP, and for G protein-effector interaction. The chain is Guanine nucleotide-binding protein subunit beta (GB1) from Solanum tuberosum (Potato).